The primary structure comprises 1222 residues: ATP-dependent helicase/nuclease subunit A (1222 aa).

Residues 39-495 (QKRTAQQIEA…ILLKENFRSQ (457 aa)) form the UvrD-like helicase ATP-binding domain. 60–67 (ASAGSGKT) is a binding site for ATP. The 287-residue stretch at 524–810 (QLIAGSHAQT…NLMTIHKSKG (287 aa)) folds into the UvrD-like helicase C-terminal domain.

It belongs to the helicase family. AddA subfamily. In terms of assembly, heterodimer of AddA and AddB/RexB. The cofactor is Mg(2+).

It catalyses the reaction Couples ATP hydrolysis with the unwinding of duplex DNA by translocating in the 3'-5' direction.. It carries out the reaction ATP + H2O = ADP + phosphate + H(+). The heterodimer acts as both an ATP-dependent DNA helicase and an ATP-dependent, dual-direction single-stranded exonuclease. Recognizes the chi site generating a DNA molecule suitable for the initiation of homologous recombination. The AddA nuclease domain is required for chi fragment generation; this subunit has the helicase and 3' -&gt; 5' nuclease activities. The protein is ATP-dependent helicase/nuclease subunit A of Streptococcus pyogenes serotype M18 (strain MGAS8232).